Here is a 376-residue protein sequence, read N- to C-terminus: Chaperone protein DnaJ (376 aa).

One can recognise a J domain in the interval 5 to 70 (DYYEVLGVGR…DKKAAYDQFG (66 aa)). The CR-type zinc-finger motif lies at 132–210 (GLTKELRIPT…CHGEGRVEKS (79 aa)). Zn(2+)-binding residues include Cys145, Cys148, Cys162, Cys165, Cys184, Cys187, Cys198, and Cys201. CXXCXGXG motif repeat units lie at residues 145–152 (CDLCDGSG), 162–169 (CGTCHGQG), 184–191 (CPTCHGRG), and 198–205 (CGKCHGEG).

It belongs to the DnaJ family. Homodimer. Zn(2+) serves as cofactor.

It localises to the cytoplasm. In terms of biological role, participates actively in the response to hyperosmotic and heat shock by preventing the aggregation of stress-denatured proteins and by disaggregating proteins, also in an autonomous, DnaK-independent fashion. Unfolded proteins bind initially to DnaJ; upon interaction with the DnaJ-bound protein, DnaK hydrolyzes its bound ATP, resulting in the formation of a stable complex. GrpE releases ADP from DnaK; ATP binding to DnaK triggers the release of the substrate protein, thus completing the reaction cycle. Several rounds of ATP-dependent interactions between DnaJ, DnaK and GrpE are required for fully efficient folding. Also involved, together with DnaK and GrpE, in the DNA replication of plasmids through activation of initiation proteins. The protein is Chaperone protein DnaJ of Shewanella loihica (strain ATCC BAA-1088 / PV-4).